Here is a 150-residue protein sequence, read N- to C-terminus: Ribosome maturation factor RimP (150 aa).

This sequence belongs to the RimP family.

It localises to the cytoplasm. Functionally, required for maturation of 30S ribosomal subunits. In Francisella tularensis subsp. mediasiatica (strain FSC147), this protein is Ribosome maturation factor RimP.